The primary structure comprises 701 residues: Polyribonucleotide nucleotidyltransferase (701 aa).

Positions 485 and 491 each coordinate Mg(2+). Positions 552-611 constitute a KH domain; that stretch reads PKTQIMSINPDKIRDVIGAGGKVINKIIQDTGVKIDIKEDGTVFVSSTDHNGVNEAIKII. The 69-residue stretch at 621-689 folds into the S1 motif domain; it reads GEVYLGKVTK…NQGRINLSRK (69 aa).

Belongs to the polyribonucleotide nucleotidyltransferase family. The cofactor is Mg(2+).

The protein resides in the cytoplasm. The catalysed reaction is RNA(n+1) + phosphate = RNA(n) + a ribonucleoside 5'-diphosphate. Involved in mRNA degradation. Catalyzes the phosphorolysis of single-stranded polyribonucleotides processively in the 3'- to 5'-direction. The protein is Polyribonucleotide nucleotidyltransferase of Clostridium beijerinckii (strain ATCC 51743 / NCIMB 8052) (Clostridium acetobutylicum).